Here is a 339-residue protein sequence, read N- to C-terminus: Anthranilate phosphoribosyltransferase (339 aa).

5-phospho-alpha-D-ribose 1-diphosphate-binding positions include G81, 84-85 (GD), S89, 91-94 (NVSS), 109-117 (KHGNRALSS), and A121. G81 is an anthranilate binding site. S93 serves as a coordination point for Mg(2+). N112 is an anthranilate binding site. Residue R167 participates in anthranilate binding. Mg(2+)-binding residues include D225 and E226.

It belongs to the anthranilate phosphoribosyltransferase family. As to quaternary structure, homodimer. Mg(2+) is required as a cofactor.

It catalyses the reaction N-(5-phospho-beta-D-ribosyl)anthranilate + diphosphate = 5-phospho-alpha-D-ribose 1-diphosphate + anthranilate. The protein operates within amino-acid biosynthesis; L-tryptophan biosynthesis; L-tryptophan from chorismate: step 2/5. In terms of biological role, catalyzes the transfer of the phosphoribosyl group of 5-phosphorylribose-1-pyrophosphate (PRPP) to anthranilate to yield N-(5'-phosphoribosyl)-anthranilate (PRA). In Brucella abortus (strain S19), this protein is Anthranilate phosphoribosyltransferase.